The primary structure comprises 109 residues: FK506-binding protein (109 aa).

In terms of domain architecture, PPIase FKBP-type spans 20 to 108 (GKEITVHYTG…IFEVELLKVY (89 aa)).

The protein belongs to the FKBP-type PPIase family.

It carries out the reaction [protein]-peptidylproline (omega=180) = [protein]-peptidylproline (omega=0). Functionally, PPIases accelerate the folding of proteins. The sequence is that of FK506-binding protein (fbp) from Neisseria meningitidis serogroup C.